The primary structure comprises 449 residues: MGRMFGTDGVRGVANKELTADLAYKLGKAGAFILTEGTHRPKILVGMDTRISGDMLESALVAGILSVGAEAICVGVIPTPAIAYLTRKYNADAGVVISASHNPVEYNGIKFFNKNGYKLSDELEDSIQALIRDDFKDVPVLTGENIGRKIEEDGEAIRDYIDFAKSTIKGDLKGLKVALDCANGASYITSVEAFKELEAEVHVINNKPDGININRNSGSTHPEDLMEYVVKNNCHMGLAFDGDADRCLAIDEKGNLINGDFILAICGKELKKQGRLKKNTIVVTVMSNLGLDIAMKKEEINTIKTKVGDRYVLEEMLKNDYAIGGEQSGHIIFSDYNTTGDGLVTALQLAHIVKESGKTFSELCSIMKELPQVLVNAKVPNDQKDIYLKDEEIKSEIDTITKNLDGSGRVLIRPSGTEPLVRVMLEGENQKEIDKLAHGLAKLIENKVK.

Residue serine 100 is the Phosphoserine intermediate of the active site. Mg(2+) contacts are provided by serine 100, aspartate 241, aspartate 243, and aspartate 245. Serine 100 bears the Phosphoserine mark.

It belongs to the phosphohexose mutase family. It depends on Mg(2+) as a cofactor. In terms of processing, activated by phosphorylation.

The enzyme catalyses alpha-D-glucosamine 1-phosphate = D-glucosamine 6-phosphate. Its function is as follows. Catalyzes the conversion of glucosamine-6-phosphate to glucosamine-1-phosphate. This chain is Phosphoglucosamine mutase, found in Clostridium botulinum (strain Langeland / NCTC 10281 / Type F).